A 133-amino-acid polypeptide reads, in one-letter code: Small ribosomal subunit protein uS8 (133 aa).

It belongs to the universal ribosomal protein uS8 family. Part of the 30S ribosomal subunit.

In terms of biological role, one of the primary rRNA binding proteins, it binds directly to 16S rRNA central domain where it helps coordinate assembly of the platform of the 30S subunit. This is Small ribosomal subunit protein uS8 from Desulfurococcus amylolyticus (strain DSM 18924 / JCM 16383 / VKM B-2413 / 1221n) (Desulfurococcus kamchatkensis).